Here is a 390-residue protein sequence, read N- to C-terminus: Alpha-2B adrenergic receptor (390 aa).

Residues 1-25 (AIATVITFLILFTIFGNSLVILAVL) form a helical membrane-spanning segment. At 26–36 (TSRSLRAPQNL) the chain is on the cytoplasmic side. A helical transmembrane segment spans residues 37 to 62 (FLVSLAAADIMVATLIIPFSLANELL). Residues 63–72 (GYWYFRRTWC) are Extracellular-facing. Cys72 and Cys151 form a disulfide bridge. Residues 73 to 95 (EVYLALDVLFCTSSIVHLCAISL) form a helical membrane-spanning segment. Topologically, residues 96–117 (DRYWAVSRALEYNSKRTPRRIK) are cytoplasmic. The chain crosses the membrane as a helical span at residues 118 to 140 (CIILTVWLIAAAISLPPLIYKGD). The Extracellular portion of the chain corresponds to 141–156 (QGPQPRGRPQCKLNQE). The helical transmembrane segment at 157–180 (AWYILSSSIGSFFAPCLIMILVYL) threads the bilayer. Over 181-354 (RIYLIAKRSH…LTREKRFTFV (174 aa)) the chain is Cytoplasmic. 2 disordered regions span residues 191 to 218 (RRGPGAKGGPRKGESKQPHSLDSGPSAL) and 233 to 311 (EANG…PLQQ). Residues 280–292 (LEEEADKEEEEEC) show a composition bias toward acidic residues. The chain crosses the membrane as a helical span at residues 355 to 378 (LAVVIGVFVLCWFPFFFSYSLGAI). Residues 379–390 (CPQHCKVPHGLF) are Extracellular-facing.

This sequence belongs to the G-protein coupled receptor 1 family. Adrenergic receptor subfamily. ADRA2B sub-subfamily. In terms of assembly, interacts with RAB26. Interacts with PPP1R9B. Interacts with GGA1, GGA2 and GGA3.

The protein localises to the cell membrane. Its function is as follows. Alpha-2 adrenergic receptors mediate the catecholamine-induced inhibition of adenylate cyclase through the action of G proteins. The polypeptide is Alpha-2B adrenergic receptor (ADRA2B) (Dugong dugon (Dugong)).